We begin with the raw amino-acid sequence, 91 residues long: Probable Fe(2+)-trafficking protein (91 aa).

Belongs to the Fe(2+)-trafficking protein family.

Its function is as follows. Could be a mediator in iron transactions between iron acquisition and iron-requiring processes, such as synthesis and/or repair of Fe-S clusters in biosynthetic enzymes. This chain is Probable Fe(2+)-trafficking protein, found in Polynucleobacter necessarius subsp. necessarius (strain STIR1).